Here is a 337-residue protein sequence, read N- to C-terminus: Inositol 2-dehydrogenase 1 (337 aa).

The protein belongs to the Gfo/Idh/MocA family. Homotetramer.

It catalyses the reaction myo-inositol + NAD(+) = scyllo-inosose + NADH + H(+). In terms of biological role, involved in the oxidation of myo-inositol (MI) to 2-keto-myo-inositol (2KMI or 2-inosose). The sequence is that of Inositol 2-dehydrogenase 1 from Saccharopolyspora erythraea (strain ATCC 11635 / DSM 40517 / JCM 4748 / NBRC 13426 / NCIMB 8594 / NRRL 2338).